Consider the following 304-residue polypeptide: E3 ubiquitin-protein ligase CHIP (304 aa).

The segment covering 1–10 (MKGKEEKEGG) has biased composition (basic and acidic residues). Residues 1–30 (MKGKEEKEGGARLGTGGGGSPDKSPSAQEL) form a disordered region. Lys-2 participates in a covalent cross-link: Glycyl lysine isopeptide (Lys-Gly) (interchain with G-Cter in ubiquitin). Gly residues predominate over residues 11 to 20 (ARLGTGGGGS). Ser-20 carries the post-translational modification Phosphoserine. Lys-23 participates in a covalent cross-link: Glycyl lysine isopeptide (Lys-Gly) (interchain with G-Cter in ubiquitin). Phosphoserine occurs at positions 24 and 26. TPR repeat units follow at residues 27-60 (AQEL…NPLV), 61-94 (AVYY…DGQS), and 96-128 (KAHF…AKEQ). A required for interaction with MAPK7 region spans residues 102–201 (GQCQLEMESY…GHIRAQQACI (100 aa)). The required for interaction with and ubiquitination of MYOCD stretch occupies residues 143-197 (AKKKRWNSIEERRIHQESELHSYLTRLIAAERERELEECQRNHEGHEDDGHIRAQ). A required for interaction with FOXO1 region spans residues 144 to 198 (KKKRWNSIEERRIHQESELHSYLTRLIAAERERELEECQRNHEGHEDDGHIRAQQ). A required for ubiquitination of FOXO1 region spans residues 144–304 (KKKRWNSIEE…ISENGWVEDY (161 aa)). Position 150 is a phosphoserine (Ser-150). Glycyl lysine isopeptide (Lys-Gly) (interchain with G-Cter in ubiquitin) cross-links involve residues Lys-222 and Lys-256. The U-box domain maps to 227–301 (DIPDYLCGKI…DAFISENGWV (75 aa)). Ser-274 is subject to Phosphoserine.

In terms of assembly, homodimer. Interacts with BAG2, and with the E2 ubiquitin conjugating enzymes UBE2D1, UBE2D2 and UBE2D3. Detected in a ternary complex containing STUB1, HSPA1A and HSPBP1. Part of a complex composed of STUB1/CHIP, VCP/p97, CHRNA3, and UBXN2A that modulates the ubiquitination and endoplasmic reticulum-associated degradation (ERAD) of CHRNA3. Within the complex UBXN2A acts as a scaffold protein required for the interaction of CHRNA3 with VCP/p97, this interaction also inhibits CHRNA3 ubiquitination by STUB1/CHIP and subsequently ERAD. Interacts with MKKS. Interacts with DNAAF4. Interacts (via the U-box domain) with the UBE2V2-UBE2N heterodimer; the complex has a specific 'Lys-63'-linked polyubiquitination activity. Interacts (when monoubiquitinated) with ATXN3. Interacts with UBE2W. Interacts with DNAJB6. Interacts with FLCN and HSP90AA1. Interacts with HSP90. Interacts with UBE2N and UBE2V1. Interacts (via TPR repeats) with HSPA8 (via C-terminus). Interacts (via TPR repeats) with HSPA1A (via C-terminus). Interacts with the non-acetylated form of HSPA1A and HSPA1B. Interacts with SMAD3 and HSP90AB1. Interacts with UBE4B. Interacts with PRMT5. Interacts with MYOCD (via C-terminus). Interacts with FOXO1 (when phosphorylated on 'Ser-253'). Interacts with MAPK7/ERK5; the interaction is enhanced in the presence of IGF1 or MAP2K5 and promotes STUB1/CHIP E3 ligase activity. Interacts with and ubiquitinates ESR1; the interaction is promoted in the absence of estradiol (17-beta-estradiol/E2). Interacts with ESR2. Interacts with and ubiquitinates NFATC3; HSPA1A/HSP70 is required as a co-chaperone. In macrophages, interacts with PAQR3; the interaction promotes PPARG poylubiquitination and STUB1-mediated degradation. Component of the chaperone-assisted selective autophagy (CASA) complex consisting of BAG3, HSPA8/HSC70, HSPB8 and STUB1/CHIP. In terms of processing, auto-ubiquitinated; mediated by UBE2D1 and UBE2D2 and enhanced in the presence of MAP2K5. Monoubiquitinated at Lys-2 following cell stress by UBE2W, promoting the interaction with ATXN3. Expressed in the brain.

Its subcellular location is the cytoplasm. The protein localises to the nucleus. It is found in the mitochondrion. It catalyses the reaction S-ubiquitinyl-[E2 ubiquitin-conjugating enzyme]-L-cysteine + [acceptor protein]-L-lysine = [E2 ubiquitin-conjugating enzyme]-L-cysteine + N(6)-ubiquitinyl-[acceptor protein]-L-lysine.. It participates in protein modification; protein ubiquitination. E3 ubiquitin-protein ligase which targets misfolded chaperone substrates towards proteasomal degradation. Plays a role in the maintenance of mitochondrial morphology and promotes mitophagic removal of dysfunctional mitochondria; thereby acts as a protector against apoptosis in response to cellular stress. Negatively regulates vascular smooth muscle contraction, via degradation of the transcriptional activator MYOCD and subsequent loss of transcription of genes involved in vascular smooth muscle contraction. Promotes survival and proliferation of cardiac smooth muscle cells via ubiquitination and degradation of FOXO1, resulting in subsequent repression of FOXO1-mediated transcription of pro-apoptotic genes. Ubiquitinates ICER-type isoforms of CREM and targets them for proteasomal degradation, thereby acts as a positive effector of MAPK/ERK-mediated inhibition of apoptosis in cardiomyocytes. Inhibits lipopolysaccharide-induced apoptosis and hypertrophy in cardiomyocytes, via ubiquitination and subsequent proteasomal degradation of NFATC3. Collaborates with ATXN3 in the degradation of misfolded chaperone substrates: ATXN3 restricting the length of ubiquitin chain attached to STUB1/CHIP substrates and preventing further chain extension. Ubiquitinates NOS1 in concert with Hsp70 and Hsp40. Modulates the activity of several chaperone complexes, including Hsp70, Hsc70 and Hsp90. Ubiquitinates CHRNA3 targeting it for endoplasmic reticulum-associated degradation in cortical neurons, as part of the STUB1-VCP-UBXN2A complex. Ubiquitinates and promotes ESR1 proteasomal degradation in response to age-related circulating estradiol (17-beta-estradiol/E2) decline, thereby promotes neuronal apoptosis in response to ischemic reperfusion injury. Mediates transfer of non-canonical short ubiquitin chains to HSPA8 that have no effect on HSPA8 degradation. Mediates polyubiquitination of DNA polymerase beta (POLB) at 'Lys-41', 'Lys-61' and 'Lys-81', thereby playing a role in base-excision repair: catalyzes polyubiquitination by amplifying the HUWE1/ARF-BP1-dependent monoubiquitination and leading to POLB-degradation by the proteasome. Mediates polyubiquitination of CYP3A4. Ubiquitinates EPHA2 and may regulate the receptor stability and activity through proteasomal degradation. Acts as a co-chaperone for HSPA1A and HSPA1B chaperone proteins and promotes ubiquitin-mediated protein degradation. Negatively regulates the suppressive function of regulatory T-cells (Treg) during inflammation by mediating the ubiquitination and degradation of FOXP3 in a HSPA1A/B-dependent manner. Catalyzes monoubiquitination of SIRT6, preventing its degradation by the proteasome. Likely mediates polyubiquitination and down-regulates plasma membrane expression of PD-L1/CD274, an immune inhibitory ligand critical for immune tolerance to self and antitumor immunity. Negatively regulates TGF-beta signaling by modulating the basal level of SMAD3 via ubiquitin-mediated degradation. Plays a role in the degradation of TP53. Mediates ubiquitination of RIPK3 leading to its subsequent proteasome-dependent degradation. May regulate myosin assembly in striated muscles together with UBE4B and VCP/p97 by targeting myosin chaperone UNC45B for proteasomal degradation. Ubiquitinates PPARG in macrophages playing a role in M2 macrophages polarization and angiogenesis. This chain is E3 ubiquitin-protein ligase CHIP, found in Mus musculus (Mouse).